A 282-amino-acid polypeptide reads, in one-letter code: 2-dehydro-3-deoxyphosphooctonate aldolase (282 aa).

Belongs to the KdsA family.

The protein localises to the cytoplasm. The enzyme catalyses D-arabinose 5-phosphate + phosphoenolpyruvate + H2O = 3-deoxy-alpha-D-manno-2-octulosonate-8-phosphate + phosphate. Its pathway is carbohydrate biosynthesis; 3-deoxy-D-manno-octulosonate biosynthesis; 3-deoxy-D-manno-octulosonate from D-ribulose 5-phosphate: step 2/3. The protein operates within bacterial outer membrane biogenesis; lipopolysaccharide biosynthesis. This Bordetella avium (strain 197N) protein is 2-dehydro-3-deoxyphosphooctonate aldolase.